The following is a 914-amino-acid chain: Exoglucanase-2 (914 aa).

The first 33 residues, 1 to 33, serve as a signal peptide directing secretion; the sequence is MKRRLMKGISLLTLVFLIGIMLQLSLKSELTAY. The region spanning 763-914 is the CBM3 domain; that stretch reads VEGVLIIQSF…SGNLVYGIEP (152 aa).

Belongs to the glycosyl hydrolase 48 (cellulase L) family.

It carries out the reaction Hydrolysis of (1-&gt;4)-beta-D-glucosidic linkages in cellulose and cellotetraose, releasing cellobiose from the non-reducing ends of the chains.. The protein is Exoglucanase-2 (celY) of Thermoclostridium stercorarium (strain ATCC 35414 / DSM 8532 / NCIMB 11754) (Clostridium stercorarium).